The sequence spans 247 residues: Ras-like protein family member 11B (247 aa).

A small GTPase-like region spans residues 29–247 (ASSRVIKIAV…SAKVRTATSV (219 aa)). GTP-binding positions include 40–47 (GGSGVGKT), 87–91 (DTPGV), and 152–155 (NKAD). The tract at residues 205–228 (QNTGTPERRKNSLIPRPKSPNMQD) is disordered.

Belongs to the small GTPase superfamily. Ras family.

The catalysed reaction is GTP + H2O = GDP + phosphate + H(+). The protein is Ras-like protein family member 11B of Xenopus tropicalis (Western clawed frog).